The primary structure comprises 248 residues: Aquaporin Z (248 aa).

The next 2 membrane-spanning stretches (helical) occupy residues 11–31 (FIGT…AAAF) and 36–56 (IGFA…AFAI). The NPA 1 signature appears at 65 to 67 (NPA). The next 3 membrane-spanning stretches (helical) occupy residues 87–107 (IAAQ…IAGG), 132–152 (LLAC…IILG), and 161–181 (GFAP…SIPV). The short motif at 187 to 189 (NPA) is the NPA 2 element. A helical membrane pass occupies residues 203-223 (IAELWLFWLAPIVGAALAGLF).

It belongs to the MIP/aquaporin (TC 1.A.8) family. As to quaternary structure, homotetramer.

It localises to the cell inner membrane. It catalyses the reaction H2O(in) = H2O(out). Functionally, channel that permits osmotically driven movement of water in both directions. It is involved in the osmoregulation and in the maintenance of cell turgor during volume expansion in rapidly growing cells. It mediates rapid entry or exit of water in response to abrupt changes in osmolarity. This chain is Aquaporin Z, found in Gloeobacter violaceus (strain ATCC 29082 / PCC 7421).